Consider the following 350-residue polypeptide: Protein RecA (350 aa).

An ATP-binding site is contributed by 67 to 74 (GPESSGKT).

Belongs to the RecA family.

Its subcellular location is the cytoplasm. Can catalyze the hydrolysis of ATP in the presence of single-stranded DNA, the ATP-dependent uptake of single-stranded DNA by duplex DNA, and the ATP-dependent hybridization of homologous single-stranded DNAs. It interacts with LexA causing its activation and leading to its autocatalytic cleavage. The chain is Protein RecA from Baumannia cicadellinicola subsp. Homalodisca coagulata.